Here is a 411-residue protein sequence, read N- to C-terminus: tRNA (uracil(54)-C(5))-methyltransferase (411 aa).

[4Fe-4S] cluster contacts are provided by cysteine 62, cysteine 68, cysteine 71, and cysteine 138. S-adenosyl-L-methionine is bound by residues glutamine 254, tyrosine 280, threonine 285, 301–302 (DS), aspartate 328, and aspartate 342. Residue cysteine 369 is the Nucleophile of the active site. Glutamate 402 serves as the catalytic Proton acceptor.

It belongs to the class I-like SAM-binding methyltransferase superfamily. RNA M5U methyltransferase family.

The enzyme catalyses uridine(54) in tRNA + S-adenosyl-L-methionine = 5-methyluridine(54) in tRNA + S-adenosyl-L-homocysteine + H(+). Catalyzes the formation of 5-methyl-uridine at position 54 (m5U54) in tRNA. In Pyrococcus furiosus (strain ATCC 43587 / DSM 3638 / JCM 8422 / Vc1), this protein is tRNA (uracil(54)-C(5))-methyltransferase.